The following is a 130-amino-acid chain: Protein ApaG (130 aa).

Residues Lys3–Arg127 form the ApaG domain.

This Methylobacterium radiotolerans (strain ATCC 27329 / DSM 1819 / JCM 2831 / NBRC 15690 / NCIMB 10815 / 0-1) protein is Protein ApaG.